A 473-amino-acid chain; its full sequence is Cysteine--tRNA ligase (473 aa).

Residue Cys-28 coordinates Zn(2+). The short motif at 30–40 (PTVYNYIHIGN) is the 'HIGH' region element. Zn(2+) is bound by residues Cys-210, His-235, and Glu-239. The 'KMSKS' region signature appears at 267 to 271 (KMSKS). Lys-270 provides a ligand contact to ATP.

The protein belongs to the class-I aminoacyl-tRNA synthetase family. As to quaternary structure, monomer. It depends on Zn(2+) as a cofactor.

The protein resides in the cytoplasm. The catalysed reaction is tRNA(Cys) + L-cysteine + ATP = L-cysteinyl-tRNA(Cys) + AMP + diphosphate. The protein is Cysteine--tRNA ligase of Fusobacterium nucleatum subsp. nucleatum (strain ATCC 25586 / DSM 15643 / BCRC 10681 / CIP 101130 / JCM 8532 / KCTC 2640 / LMG 13131 / VPI 4355).